Consider the following 75-residue polypeptide: Small ribosomal subunit protein bS18 (75 aa).

This sequence belongs to the bacterial ribosomal protein bS18 family. In terms of assembly, part of the 30S ribosomal subunit. Forms a tight heterodimer with protein bS6.

Its function is as follows. Binds as a heterodimer with protein bS6 to the central domain of the 16S rRNA, where it helps stabilize the platform of the 30S subunit. This Glaesserella parasuis serovar 5 (strain SH0165) (Haemophilus parasuis) protein is Small ribosomal subunit protein bS18.